Here is a 434-residue protein sequence, read N- to C-terminus: Histidine--tRNA ligase (434 aa).

It belongs to the class-II aminoacyl-tRNA synthetase family. Homodimer.

It is found in the cytoplasm. It carries out the reaction tRNA(His) + L-histidine + ATP = L-histidyl-tRNA(His) + AMP + diphosphate + H(+). This Chlorobium phaeobacteroides (strain BS1) protein is Histidine--tRNA ligase.